An 83-amino-acid polypeptide reads, in one-letter code: Small ribosomal subunit protein eS21 (83 aa).

The residue at position 1 (Met-1) is an N-acetylmethionine. A Glycyl lysine isopeptide (Lys-Gly) (interchain with G-Cter in SUMO2) cross-link involves residue Lys-41.

Belongs to the eukaryotic ribosomal protein eS21 family. Component of the 40S small ribosomal subunit.

The protein localises to the cytoplasm. Its subcellular location is the cytosol. The protein resides in the rough endoplasmic reticulum. Component of the small ribosomal subunit. The ribosome is a large ribonucleoprotein complex responsible for the synthesis of proteins in the cell. The chain is Small ribosomal subunit protein eS21 (RPS21) from Oryctolagus cuniculus (Rabbit).